The chain runs to 722 residues: Mesentericin-Y105 transport/processing ATP-binding protein MesD (722 aa).

The 128-residue stretch at 16–143 (QVDERDCGVA…EEWTGVSIFI (128 aa)) folds into the Peptidase C39 domain. Residue C22 is part of the active site. The next 8 membrane-spanning stretches (helical) occupy residues 171–191 (LLVI…ILGS), 210–230 (LGIV…LSYA), 242–262 (LSID…MSFF), 287–307 (TMLS…VLVV), 311–331 (TLFL…WLFM), 401–421 (SLLQ…LVMT), 429–449 (LITY…IINL), and 518–538 (IALV…LVNF). Residues 173–455 (VINIVIAALL…IINLQTKLQQ (283 aa)) form the ABC transmembrane type-1 domain. Residues 489–722 (LVADHITYKY…GGFYASLFNH (234 aa)) form the ABC transporter domain. Residue 522–529 (GISGSGKS) participates in ATP binding.

It belongs to the ABC transporter superfamily.

It is found in the cell membrane. Involved in the export process of the bacteriocin mesentericin-Y105. The polypeptide is Mesentericin-Y105 transport/processing ATP-binding protein MesD (mesD) (Leuconostoc mesenteroides).